The following is a 635-amino-acid chain: Threonine--tRNA ligase (635 aa).

A TGS domain is found at 1–61; that stretch reads MVSIRLPDGS…DRDASLAIVT (61 aa). Residues 242–533 are catalytic; sequence DHRKLGKQLD…LIEHHAGAMP (292 aa). Positions 333, 384, and 510 each coordinate Zn(2+).

Belongs to the class-II aminoacyl-tRNA synthetase family. As to quaternary structure, homodimer. It depends on Zn(2+) as a cofactor.

It localises to the cytoplasm. It catalyses the reaction tRNA(Thr) + L-threonine + ATP = L-threonyl-tRNA(Thr) + AMP + diphosphate + H(+). Functionally, catalyzes the attachment of threonine to tRNA(Thr) in a two-step reaction: L-threonine is first activated by ATP to form Thr-AMP and then transferred to the acceptor end of tRNA(Thr). Also edits incorrectly charged L-seryl-tRNA(Thr). The polypeptide is Threonine--tRNA ligase (Burkholderia lata (strain ATCC 17760 / DSM 23089 / LMG 22485 / NCIMB 9086 / R18194 / 383)).